A 453-amino-acid polypeptide reads, in one-letter code: MKFTTLATIASTLLFAANANADTCNPLKSSDCSPVPALGSSFLEKFDNGLGPHFESLKKQGTIDSGSNGLSLTMKKRFDNPSFKSNFYIMFGRVEVVLKGAEGKGIVSSFYLQSDDLDEIDIEMFGGDPYQWQSNYFIKGNTATYDRGGYHDIANPLKDYHTYVIDWTKDAVTWSVDGSVIRTIPKDNAQGFPQSPMAIYAGIWAGGDPSNQPGTIDWAGGITDYSQAPFTMGIKSVLVADYSSGKQYSYSDQSGSWESIKADGGKVNGRYDQAQDDIKKLESGQSVDSNDSSSSPSASSSDSSSTSSASSSSSSSSPSSTTSSSSSSSSSSSSSSSSSSEKSNAVPSASVIVFIGTKGGDKTTVTSSSGVSVPTSASVSTAAGTTSGSANSAPASAASSTASTVFISTGDAAPSSSASEKPSVSTTENNGAVSVAKTTSLFGFVALIGFLFV.

A signal peptide spans 1 to 21; that stretch reads MKFTTLATIASTLLFAANANA. C24 and C32 are oxidised to a cystine. The GH16 domain maps to 28-227; sequence KSSDCSPVPA…WAGGITDYSQ (200 aa). E119 serves as the catalytic Nucleophile. The Proton donor role is filled by E123. Chitin is bound by residues E123, W204, and T215. Disordered regions lie at residues 281–343, 362–397, and 410–430; these read LESG…SEKS, KTTV…PASA, and GDAA…TENN. 3 stretches are compositionally biased toward low complexity: residues 286-343, 363-397, and 412-425; these read SVDS…SEKS, TTVT…PASA, and AAPS…PSVS. An N-linked (GlcNAc...) asparagine glycan is attached at N290. A lipid anchor (GPI-anchor amidated asparagine) is attached at N430. The propeptide at 431-453 is removed in mature form; the sequence is GAVSVAKTTSLFGFVALIGFLFV.

Belongs to the glycosyl hydrolase 16 family. CRH1 subfamily. Post-translationally, the GPI-anchor is attached to the protein in the endoplasmic reticulum and serves to target the protein to the cell surface. There, the glucosamine-inositol phospholipid moiety is cleaved off and the GPI-modified mannoprotein is covalently attached via its lipidless GPI glycan remnant to the 1,6-beta-glucan of the outer cell wall layer.

The protein localises to the secreted. It is found in the cell wall. It localises to the membrane. The catalysed reaction is Random endo-hydrolysis of N-acetyl-beta-D-glucosaminide (1-&gt;4)-beta-linkages in chitin and chitodextrins.. Dual chitinase/transglycosylase that plays a role in cell wall architecture. Chitinase and transglycosylase activities are coupled. Required for the polysaccharide cross-linking at the septa and the cell wall. More specifically, transfers chitin to 1,6-beta-glucan in the cell wall. Plays an important role in fungal pathogenesis via its functions in cell wall assembly and regeneration, filamentation, and adherence to host cells. This is Crh-like protein CRH11 (CRH11) from Candida albicans (strain SC5314 / ATCC MYA-2876) (Yeast).